The following is a 947-amino-acid chain: Serine-aspartate repeat-containing protein C (947 aa).

An N-terminal signal peptide occupies residues 1–50; the sequence is MNNKKTATNRKGMIPNRLNKFSIRKYSVGTASILVGTTLIFGLSGHEAKA. Residues 51 to 164 are disordered; sequence AEHTNGELNQ…STTPKTTTIK (114 aa). The segment at 51-495 is ligand binding A region; sequence AEHTNGELNQ…GSSTANGDQK (445 aa). Residues 56–71 are compositionally biased toward polar residues; the sequence is GELNQSKNETTAPSEN. Basic and acidic residues predominate over residues 72–83; that stretch reads KTTKKVDSRQLK. Positions 84 to 155 are enriched in polar residues; the sequence is DNTQTATADQ…SNLTQAKDVS (72 aa). 2 consecutive CNA-B domains span residues 496–606 and 607–717; these read KYNL…YKTP and KYSL…EEET. The disordered stretch occupies residues 678 to 927; the sequence is TQTGTNTTED…NNSNNGTLFG (250 aa). 2 stretches are compositionally biased toward acidic residues: residues 685 to 695 and 712 to 886; these read TEDDKDADGGE and YYEE…DSDS. An LPXTG sorting signal motif is present at residues 910-914; that stretch reads LPETG. The segment covering 912–927 has biased composition (low complexity); that stretch reads ETGSENNNSNNGTLFG. T913 is subject to Pentaglycyl murein peptidoglycan amidated threonine. Residues 914-947 constitute a propeptide, removed by sortase; sequence GSENNNSNNGTLFGGLFAALGSLLLFGRRKKQNK.

The protein belongs to the serine-aspartate repeat-containing protein (SDr) family. In terms of assembly, homodimerizes; via N2-Domain. Interacts with host NRXN1; this interaction mediates bacterial attachment to host cells.

Its subcellular location is the secreted. The protein resides in the cell wall. Cell surface-associated calcium-binding protein which plays an important role in adhesion and pathogenesis. Mediates interactions with components of the extracellular matrix such as host NRXN1 to promote bacterial adhesion. The chain is Serine-aspartate repeat-containing protein C (sdrC) from Staphylococcus aureus (strain COL).